Consider the following 258-residue polypeptide: Tropinone reductase-like 3 (258 aa).

An NAD(+)-binding site is contributed by 19 to 43; that stretch reads IVTASTQGIGFAIAYRLGLEGAAVV. Ser-150 provides a ligand contact to substrate. Catalysis depends on Tyr-163, which acts as the Proton acceptor.

The protein belongs to the short-chain dehydrogenases/reductases (SDR) family.

Its function is as follows. Has no tropinone reductase activity. The polypeptide is Tropinone reductase-like 3 (Erythroxylum coca (Coca plant)).